Consider the following 153-residue polypeptide: Ubiquitin-conjugating enzyme E2 35 (153 aa).

In terms of domain architecture, UBC core spans 5-151 (NLPRRIIKET…AKEWTRLYAS (147 aa)). Residue Cys89 is the Glycyl thioester intermediate of the active site.

The protein belongs to the ubiquitin-conjugating enzyme family. As to quaternary structure, interacts with yeast and human Mms2, with the RING domain of RGLG2 and with UEV1A, UEV1B, UEV1C and UEV1D. Ubiquitously expressed at low level. Mainly expressed in the vasculature.

The catalysed reaction is S-ubiquitinyl-[E1 ubiquitin-activating enzyme]-L-cysteine + [E2 ubiquitin-conjugating enzyme]-L-cysteine = [E1 ubiquitin-activating enzyme]-L-cysteine + S-ubiquitinyl-[E2 ubiquitin-conjugating enzyme]-L-cysteine.. It functions in the pathway protein modification; protein ubiquitination. Catalyzes the synthesis of non-canonical poly-ubiquitin chains that are linked through 'Lys-63'. This type of poly-ubiquitination does not lead to protein degradation by the proteasome. Mediates transcriptional activation of target genes. Required for postreplication repair of UV-damaged DNA and for adapting root developmental programs to suboptimal availability of iron. This chain is Ubiquitin-conjugating enzyme E2 35 (UBC35), found in Arabidopsis thaliana (Mouse-ear cress).